We begin with the raw amino-acid sequence, 773 residues long: Protein FAM149A (773 aa).

Composition is skewed to low complexity over residues 18–37 (TSTA…AAAA) and 54–90 (LLRA…AAGA). Disordered stretches follow at residues 18–155 (TSTA…RELG), 173–210 (DIGE…DSLP), 232–264 (FSSS…TERG), and 568–613 (TQNE…PWRL). Over residues 174 to 186 (IGEEGASDGDSGD) the composition is skewed to acidic residues. Positions 245-264 (TSWSGSATQSSTTGSSTERG) are enriched in low complexity.

It belongs to the FAM149 family.

This is Protein FAM149A (FAM149A) from Homo sapiens (Human).